The following is a 440-amino-acid chain: Tyrosine--tRNA ligase (440 aa).

Tyr46 contributes to the L-tyrosine binding site. Residues 51–60 (PTAASLHIGN) carry the 'HIGH' region motif. 2 residues coordinate L-tyrosine: Tyr181 and Gln185. The 'KMSKS' region motif lies at 241–245 (KFGKS). Lys244 provides a ligand contact to ATP. Residues 373–439 (DRVIDAAQAA…GKKALGAVEN (67 aa)) form the S4 RNA-binding domain.

Belongs to the class-I aminoacyl-tRNA synthetase family. TyrS type 1 subfamily. As to quaternary structure, homodimer.

It is found in the cytoplasm. The catalysed reaction is tRNA(Tyr) + L-tyrosine + ATP = L-tyrosyl-tRNA(Tyr) + AMP + diphosphate + H(+). Catalyzes the attachment of tyrosine to tRNA(Tyr) in a two-step reaction: tyrosine is first activated by ATP to form Tyr-AMP and then transferred to the acceptor end of tRNA(Tyr). In Bifidobacterium longum subsp. infantis (strain ATCC 15697 / DSM 20088 / JCM 1222 / NCTC 11817 / S12), this protein is Tyrosine--tRNA ligase.